Reading from the N-terminus, the 248-residue chain is ATP synthase subunit a (248 aa).

The next 6 membrane-spanning stretches (helical) occupy residues 34 to 54, 91 to 111, 121 to 141, 147 to 167, 196 to 216, and 220 to 240; these read TNAT…LVFG, YFPY…LGLL, IAVT…LGFV, FLGL…LAVI, VFAA…AITA, and LEVL…CVYL.

The protein belongs to the ATPase A chain family. In terms of assembly, F-type ATPases have 2 components, CF(1) - the catalytic core - and CF(0) - the membrane proton channel. CF(1) has five subunits: alpha(3), beta(3), gamma(1), delta(1), epsilon(1). CF(0) has three main subunits: a(1), b(2) and c(9-12). The alpha and beta chains form an alternating ring which encloses part of the gamma chain. CF(1) is attached to CF(0) by a central stalk formed by the gamma and epsilon chains, while a peripheral stalk is formed by the delta and b chains.

The protein localises to the cell inner membrane. Key component of the proton channel; it plays a direct role in the translocation of protons across the membrane. The polypeptide is ATP synthase subunit a (Paracoccus denitrificans (strain Pd 1222)).